A 319-amino-acid polypeptide reads, in one-letter code: Coiled-coil domain-containing protein PF3D7_1144200 (319 aa).

Residues 1 to 12 (MSEEHSNDHIED) are compositionally biased toward basic and acidic residues. Disordered regions lie at residues 1–43 (MSEE…SESS) and 112–158 (KLEK…NQHN). Positions 16–26 (CSQNCDETNSP) are enriched in polar residues. Basic and acidic residues-rich tracts occupy residues 27–36 (KNEKDEKDFK) and 112–131 (KLEKEKEKNEKKEKKEKKVT). 3 coiled-coil regions span residues 100 to 134 (DLANKKENKTKFKLEKEKEKNEKKEKKEKKVTNDS), 166 to 242 (ELNE…IKKN), and 281 to 310 (NSNCEQIQNVRDEFAELKNDLNKIMNLINI). The segment covering 132 to 150 (NDSTNNKNKNNSVPFLNEN) has biased composition (low complexity).

This chain is Coiled-coil domain-containing protein PF3D7_1144200, found in Plasmodium falciparum (isolate 3D7).